Reading from the N-terminus, the 437-residue chain is (S)-6-hydroxynicotine oxidase (437 aa).

Residues Ser-16, 35–37 (EAR), Arg-43, 57–60 (GGAG), Val-231, Ser-405, and 413–415 (EYI) contribute to the FAD site.

Belongs to the flavin monoamine oxidase family. In terms of assembly, homodimer. It depends on FAD as a cofactor.

The catalysed reaction is (S)-6-hydroxynicotine + O2 + H2O = 6-hydroxypseudooxynicotine + H2O2. It carries out the reaction (S)-6-hydroxynicotine + O2 = 6-hydroxy-N-methylmyosmine + H2O2. It functions in the pathway alkaloid degradation; nicotine degradation; 6-hydroxypseudooxynicotine from nicotine (S-isomer route): step 2/2. Partially inhibited by Co(2+) or Zn(2+) and significantly inhibited by Ag(+), Cu(2+) and Hg(2+). Its function is as follows. Involved in the degradation of L-nicotine. Catalyzes the oxidation of (S)-6-hydroxynicotine (6-hydroxy-L-nicotine) to 6-hydroxypseudooxynicotine. Oxidation of the pyrrolidine ring of (S)-6-hydroxynicotine leads to the formation of the optically inactive 6-hydroxy-N-methylmyosmine, which hydrolyzes spontaneously to 6-hydroxypseudooxynicotine. Acts with absolute stereospecificity on the L-form of 6-hydroxynicotine. Also involved in the degradation of nornicotine, and catalyzes the oxidation of 6-hydroxynornicotine to 6-hydroxymyosmine, which hydrolyzes to 6-hydroxypseudooxynornicotine. In vitro, converts (S)-nicotine into N-methylmyosmine, which spontaneously hydrolyzes spontaneously into pseudooxynicotine, but catalytic efficiency is about 1900-fold higher with (S)-6-hydroxynicotine. This is (S)-6-hydroxynicotine oxidase from Shinella sp. (strain HZN7).